We begin with the raw amino-acid sequence, 294 residues long: 4-hydroxy-tetrahydrodipicolinate synthase (294 aa).

Pyruvate is bound at residue Thr47. Tyr135 serves as the catalytic Proton donor/acceptor. The active-site Schiff-base intermediate with substrate is the Lys163. Thr205 is a pyruvate binding site.

The protein belongs to the DapA family. In terms of assembly, homotetramer; dimer of dimers.

The protein localises to the cytoplasm. The enzyme catalyses L-aspartate 4-semialdehyde + pyruvate = (2S,4S)-4-hydroxy-2,3,4,5-tetrahydrodipicolinate + H2O + H(+). The protein operates within amino-acid biosynthesis; L-lysine biosynthesis via DAP pathway; (S)-tetrahydrodipicolinate from L-aspartate: step 3/4. Its function is as follows. Catalyzes the condensation of (S)-aspartate-beta-semialdehyde [(S)-ASA] and pyruvate to 4-hydroxy-tetrahydrodipicolinate (HTPA). The chain is 4-hydroxy-tetrahydrodipicolinate synthase from Rickettsia montanensis.